A 500-amino-acid chain; its full sequence is Protein nucleotidyltransferase YdiU (500 aa).

Positions 96, 98, 99, 119, 131, 132, 182, and 189 each coordinate ATP. The active-site Proton acceptor is the D258. Positions 259 and 268 each coordinate Mg(2+). Residue D268 coordinates ATP.

This sequence belongs to the SELO family. It depends on Mg(2+) as a cofactor. Mn(2+) serves as cofactor.

It catalyses the reaction L-seryl-[protein] + ATP = 3-O-(5'-adenylyl)-L-seryl-[protein] + diphosphate. The catalysed reaction is L-threonyl-[protein] + ATP = 3-O-(5'-adenylyl)-L-threonyl-[protein] + diphosphate. The enzyme catalyses L-tyrosyl-[protein] + ATP = O-(5'-adenylyl)-L-tyrosyl-[protein] + diphosphate. It carries out the reaction L-histidyl-[protein] + UTP = N(tele)-(5'-uridylyl)-L-histidyl-[protein] + diphosphate. It catalyses the reaction L-seryl-[protein] + UTP = O-(5'-uridylyl)-L-seryl-[protein] + diphosphate. The catalysed reaction is L-tyrosyl-[protein] + UTP = O-(5'-uridylyl)-L-tyrosyl-[protein] + diphosphate. Functionally, nucleotidyltransferase involved in the post-translational modification of proteins. It can catalyze the addition of adenosine monophosphate (AMP) or uridine monophosphate (UMP) to a protein, resulting in modifications known as AMPylation and UMPylation. The protein is Protein nucleotidyltransferase YdiU of Rhizobium leguminosarum bv. trifolii (strain WSM2304).